A 160-amino-acid polypeptide reads, in one-letter code: MRIGLFAVGRLKAGPEKDLAARYLDRFAKAGPAVGLELARLVEINESRAANAQTRKREEAAQLEKTLADGSLLLLLDERGKALDSESFATLLGTFRDGGKRDLMIAIGGADGLDPALHARADAVLCLGKMTWPHQLVRILIAEQLYRAVTILAGHPYHRA.

S-adenosyl-L-methionine-binding positions include Leu76, Gly108, and 127 to 132 (LGKMTW).

The protein belongs to the RNA methyltransferase RlmH family. Homodimer.

Its subcellular location is the cytoplasm. It carries out the reaction pseudouridine(1915) in 23S rRNA + S-adenosyl-L-methionine = N(3)-methylpseudouridine(1915) in 23S rRNA + S-adenosyl-L-homocysteine + H(+). Specifically methylates the pseudouridine at position 1915 (m3Psi1915) in 23S rRNA. The protein is Ribosomal RNA large subunit methyltransferase H of Sinorhizobium fredii (strain NBRC 101917 / NGR234).